We begin with the raw amino-acid sequence, 1145 residues long: Nucleolar protein 6 (1145 aa).

The segment at 1–46 (MQKKRNRAGPPQQEAASDDGEMSDSSDKMEVAQGKGKSAVKRAPDA) is disordered.

It belongs to the NRAP family. As to quaternary structure, part of the small subunit (SSU) processome, composed of more than 70 proteins and the RNA chaperone small nucleolar RNA (snoRNA) U3.

The protein resides in the nucleus. It is found in the nucleolus. Its subcellular location is the chromosome. Its function is as follows. Part of the small subunit (SSU) processome, first precursor of the small eukaryotic ribosomal subunit. During the assembly of the SSU processome in the nucleolus, many ribosome biogenesis factors, an RNA chaperone and ribosomal proteins associate with the nascent pre-rRNA and work in concert to generate RNA folding, modifications, rearrangements and cleavage as well as targeted degradation of pre-ribosomal RNA by the RNA exosome. This chain is Nucleolar protein 6 (nol6), found in Xenopus tropicalis (Western clawed frog).